The chain runs to 1576 residues: DNA-directed RNA polymerase subunit beta' (1576 aa).

Zn(2+)-binding residues include Cys64, Cys66, Cys79, and Cys82. The Mg(2+) site is built by Asp590, Asp592, and Asp594. Positions 928, 1002, 1009, and 1012 each coordinate Zn(2+).

It belongs to the RNA polymerase beta' chain family. In terms of assembly, the RNAP catalytic core consists of 2 alpha, 1 beta, 1 beta' and 1 omega subunit. When a sigma factor is associated with the core the holoenzyme is formed, which can initiate transcription. Mg(2+) serves as cofactor. Zn(2+) is required as a cofactor.

It carries out the reaction RNA(n) + a ribonucleoside 5'-triphosphate = RNA(n+1) + diphosphate. Functionally, DNA-dependent RNA polymerase catalyzes the transcription of DNA into RNA using the four ribonucleoside triphosphates as substrates. This Aquifex pyrophilus protein is DNA-directed RNA polymerase subunit beta'.